The chain runs to 145 residues: Basic phospholipase A2 KPA2 (145 aa).

A signal peptide spans 1 to 19 (MYPAHLLVLVAVCVSLLGA). Positions 20 to 27 (ANIPPQPL) are excised as a propeptide. 7 cysteine pairs are disulfide-bonded: Cys-38–Cys-97, Cys-52–Cys-144, Cys-54–Cys-70, Cys-69–Cys-125, Cys-76–Cys-118, Cys-86–Cys-111, and Cys-104–Cys-116. Ca(2+)-binding residues include Tyr-53, Gly-55, and Gly-57. The active site involves His-73. Asp-74 lines the Ca(2+) pocket. Asp-119 is a catalytic residue.

This sequence belongs to the phospholipase A2 family. Group I subfamily. D49 sub-subfamily. Monomer. It depends on Ca(2+) as a cofactor. In terms of tissue distribution, expressed by the venom gland.

It localises to the secreted. The catalysed reaction is a 1,2-diacyl-sn-glycero-3-phosphocholine + H2O = a 1-acyl-sn-glycero-3-phosphocholine + a fatty acid + H(+). Functionally, snake venom phospholipase A2 (PLA2) that shows anticoagulant and neurotoxic activities. PLA2 catalyzes the calcium-dependent hydrolysis of the 2-acyl groups in 3-sn-phosphoglycerides. In Bungarus caeruleus (Indian krait), this protein is Basic phospholipase A2 KPA2.